A 315-amino-acid polypeptide reads, in one-letter code: Homoserine kinase (315 aa).

97 to 107 (PPARGLGSSAT) is a binding site for ATP.

The protein belongs to the GHMP kinase family. Homoserine kinase subfamily.

It localises to the cytoplasm. It carries out the reaction L-homoserine + ATP = O-phospho-L-homoserine + ADP + H(+). Its pathway is amino-acid biosynthesis; L-threonine biosynthesis; L-threonine from L-aspartate: step 4/5. Its function is as follows. Catalyzes the ATP-dependent phosphorylation of L-homoserine to L-homoserine phosphate. This is Homoserine kinase from Prochlorococcus marinus (strain SARG / CCMP1375 / SS120).